Reading from the N-terminus, the 116-residue chain is NADH-ubiquinone oxidoreductase chain 3 (116 aa).

The next 3 helical transmembrane spans lie at Leu3–Phe23, Phe56–Leu76, and Ala85–Tyr105.

This sequence belongs to the complex I subunit 3 family.

The protein resides in the mitochondrion membrane. It carries out the reaction a ubiquinone + NADH + 5 H(+)(in) = a ubiquinol + NAD(+) + 4 H(+)(out). Core subunit of the mitochondrial membrane respiratory chain NADH dehydrogenase (Complex I) that is believed to belong to the minimal assembly required for catalysis. Complex I functions in the transfer of electrons from NADH to the respiratory chain. The immediate electron acceptor for the enzyme is believed to be ubiquinone. The sequence is that of NADH-ubiquinone oxidoreductase chain 3 (MT-ND3) from Formosania lacustris (Oriental stream loach).